Here is a 304-residue protein sequence, read N- to C-terminus: Tyrosine recombinase XerC (304 aa).

The region spanning asparagine 6–valine 92 is the Core-binding (CB) domain. In terms of domain architecture, Tyr recombinase spans histidine 113 to aspartate 292. Active-site residues include arginine 152, lysine 176, histidine 244, arginine 247, and histidine 270. Tyrosine 279 (O-(3'-phospho-DNA)-tyrosine intermediate) is an active-site residue.

The protein belongs to the 'phage' integrase family. XerC subfamily. Forms a cyclic heterotetrameric complex composed of two molecules of XerC and two molecules of XerD.

The protein resides in the cytoplasm. Functionally, site-specific tyrosine recombinase, which acts by catalyzing the cutting and rejoining of the recombining DNA molecules. The XerC-XerD complex is essential to convert dimers of the bacterial chromosome into monomers to permit their segregation at cell division. It also contributes to the segregational stability of plasmids. The polypeptide is Tyrosine recombinase XerC (Haemophilus ducreyi (strain 35000HP / ATCC 700724)).